Reading from the N-terminus, the 454-residue chain is Putative KilA-N domain-containing protein L4 (454 aa).

Residues 1–12 (MPQKTSKSKSSR) show a composition bias toward basic residues. The interval 1–159 (MPQKTSKSKS…DVPEEEYDDN (159 aa)) is disordered. The segment covering 14–64 (RYIEDSDDETRGRSRNRSIEKSRSRSLDKSQKKSRDKSLTRSRSKSPEKSK) has biased composition (basic and acidic residues). Residues 65–79 (SRSKSLTRSRSKSPK) show a composition bias toward basic residues. Acidic residues-rich tracts occupy residues 98–123 (YTTE…DEEL) and 130–158 (ESDE…EYDD). The 105-residue stretch at 172–276 (EFARGKFGDF…LKVSDIVIEY (105 aa)) folds into the KilA-N domain.

This chain is Putative KilA-N domain-containing protein L4, found in Acanthamoeba polyphaga mimivirus (APMV).